A 194-amino-acid chain; its full sequence is dATP triphosphohydrolase (194 aa).

Arginine 17 provides a ligand contact to dATP. Co(2+) is bound by residues histidine 32, histidine 71, aspartate 72, glutamate 75, aspartate 80, and aspartate 123.

Belongs to the Caudovirales dATP triphosphohydrolase family. Requires Co(2+) as cofactor.

The catalysed reaction is dATP + H2O = 2'-deoxyadenosine + triphosphate + H(+). The enzyme catalyses dADP + H2O = 2'-deoxyadenosine + diphosphate. It carries out the reaction dAMP + H2O = 2'-deoxyadenosine + phosphate. Catalyzes the hydrolysis of dATP, dADP and dAMP into dA. This step is essential for Z-genome synthesis (containing aminoadenine instead of adenine). Specifically removes dATP and its precursor dADP from the nucleotide pool of the host, preventing the incorporation of A into the phage genome and favoring the integration of the Z-base into the viral genome. The polypeptide is dATP triphosphohydrolase (datZ) (Salmonella phage PMBT28).